The chain runs to 117 residues: Ribosome-binding factor A (117 aa).

The protein belongs to the RbfA family. As to quaternary structure, monomer. Binds 30S ribosomal subunits, but not 50S ribosomal subunits or 70S ribosomes.

Its subcellular location is the cytoplasm. In terms of biological role, one of several proteins that assist in the late maturation steps of the functional core of the 30S ribosomal subunit. Associates with free 30S ribosomal subunits (but not with 30S subunits that are part of 70S ribosomes or polysomes). Required for efficient processing of 16S rRNA. May interact with the 5'-terminal helix region of 16S rRNA. This chain is Ribosome-binding factor A, found in Leptospira borgpetersenii serovar Hardjo-bovis (strain JB197).